The chain runs to 468 residues: UDP-N-acetylmuramate--L-alanine ligase (468 aa).

Residue 112-118 (GTHGKTT) coordinates ATP.

Belongs to the MurCDEF family.

Its subcellular location is the cytoplasm. It carries out the reaction UDP-N-acetyl-alpha-D-muramate + L-alanine + ATP = UDP-N-acetyl-alpha-D-muramoyl-L-alanine + ADP + phosphate + H(+). It participates in cell wall biogenesis; peptidoglycan biosynthesis. Functionally, cell wall formation. This chain is UDP-N-acetylmuramate--L-alanine ligase, found in Bordetella pertussis (strain Tohama I / ATCC BAA-589 / NCTC 13251).